A 600-amino-acid chain; its full sequence is ATP-dependent RNA helicase DDX55 (600 aa).

Residues 9–37 (WESLPVPLHPQVLGALRELGFPYMTPVQS) carry the Q motif motif. One can recognise a Helicase ATP-binding domain in the interval 40 to 223 (IPLFMRNKDV…RAGLRNPVRV (184 aa)). 53–60 (AVTGSGKT) lines the ATP pocket. The short motif at 171 to 174 (DEAD) is the DEAD box element. Positions 254–402 (KFNQLVHFLR…EMKPQRNTAD (149 aa)) constitute a Helicase C-terminal domain. Positions 500-513 (EQQRREKTENEGRR) are enriched in basic and acidic residues. The tract at residues 500 to 550 (EQQRREKTENEGRRKFIKNKAWSKQKAKKEKKKKMNEKRKREEGSDIEDED) is disordered. Residues 514 to 537 (KFIKNKAWSKQKAKKEKKKKMNEK) are compositionally biased toward basic residues. The tract at residues 533–562 (KMNEKRKREEGSDIEDEDMEELLNDTRLLK) is important for nuclear localization. Phosphoserine is present on residues serine 544 and serine 594.

This sequence belongs to the DEAD box helicase family. DDX55/SPB4 subfamily. In terms of assembly, interacts with 28S rRNA. Interacts with double-stranded RNA substrates in vitro; the interaction stimulates ATPase activity.

It localises to the nucleus. The protein localises to the nucleoplasm. It carries out the reaction ATP + H2O = ADP + phosphate + H(+). In terms of biological role, probable ATP-binding RNA helicase. Has ATPase activity and is involved in the maturation of precursor large subunit rRNAs. In Homo sapiens (Human), this protein is ATP-dependent RNA helicase DDX55.